The chain runs to 381 residues: 1-deoxy-D-xylulose 5-phosphate reductoisomerase (381 aa).

NADPH contacts are provided by Thr10, Gly11, Ser12, Ile13, Asn38, and Asn121. Lys122 contacts 1-deoxy-D-xylulose 5-phosphate. Position 123 (Glu123) interacts with NADPH. Position 147 (Asp147) interacts with Mn(2+). 1-deoxy-D-xylulose 5-phosphate contacts are provided by Ser148, Glu149, Ser173, and His196. Glu149 is a Mn(2+) binding site. Position 202 (Gly202) interacts with NADPH. Residues Ser209, Asn214, Lys215, and Glu218 each contribute to the 1-deoxy-D-xylulose 5-phosphate site. Glu218 is a Mn(2+) binding site.

This sequence belongs to the DXR family. Mg(2+) is required as a cofactor. It depends on Mn(2+) as a cofactor.

It carries out the reaction 2-C-methyl-D-erythritol 4-phosphate + NADP(+) = 1-deoxy-D-xylulose 5-phosphate + NADPH + H(+). Its pathway is isoprenoid biosynthesis; isopentenyl diphosphate biosynthesis via DXP pathway; isopentenyl diphosphate from 1-deoxy-D-xylulose 5-phosphate: step 1/6. In terms of biological role, catalyzes the NADPH-dependent rearrangement and reduction of 1-deoxy-D-xylulose-5-phosphate (DXP) to 2-C-methyl-D-erythritol 4-phosphate (MEP). This is 1-deoxy-D-xylulose 5-phosphate reductoisomerase from Alkaliphilus oremlandii (strain OhILAs) (Clostridium oremlandii (strain OhILAs)).